The chain runs to 380 residues: 1-deoxy-D-xylulose 5-phosphate reductoisomerase 2 (380 aa).

NADPH-binding residues include Ser10, Gly11, Ser12, Ile13, Gly36, Lys37, Asn38, and Asn120. Position 121 (Lys121) interacts with 1-deoxy-D-xylulose 5-phosphate. Residue Glu122 participates in NADPH binding. Asp146 provides a ligand contact to Mn(2+). 1-deoxy-D-xylulose 5-phosphate is bound by residues Ser147, Glu148, Ser172, and His195. Glu148 serves as a coordination point for Mn(2+). Gly201 lines the NADPH pocket. 4 residues coordinate 1-deoxy-D-xylulose 5-phosphate: Ser208, Asn213, Lys214, and Glu217. Glu217 lines the Mn(2+) pocket.

It belongs to the DXR family. Mg(2+) is required as a cofactor. Mn(2+) serves as cofactor.

The catalysed reaction is 2-C-methyl-D-erythritol 4-phosphate + NADP(+) = 1-deoxy-D-xylulose 5-phosphate + NADPH + H(+). It participates in isoprenoid biosynthesis; isopentenyl diphosphate biosynthesis via DXP pathway; isopentenyl diphosphate from 1-deoxy-D-xylulose 5-phosphate: step 1/6. Functionally, catalyzes the NADPH-dependent rearrangement and reduction of 1-deoxy-D-xylulose-5-phosphate (DXP) to 2-C-methyl-D-erythritol 4-phosphate (MEP). In Bacillus anthracis, this protein is 1-deoxy-D-xylulose 5-phosphate reductoisomerase 2.